A 79-amino-acid polypeptide reads, in one-letter code: Conotoxin TxMEKL-021 (79 aa).

Positions 1–19 (MEKLTILLLVAVVLMSTQA) are cleaved as a signal peptide. A propeptide spanning residues 20-47 (LPQGGGEKRPRENIRFLSKRKSNAERWR) is cleaved from the precursor. 3 disulfides stabilise this stretch: Cys-51-Cys-65, Cys-58-Cys-69, and Cys-64-Cys-75.

It belongs to the conotoxin O2 superfamily. Expressed by the venom duct.

It localises to the secreted. The polypeptide is Conotoxin TxMEKL-021 (Conus textile (Cloth-of-gold cone)).